The chain runs to 201 residues: MKVYINVYDLMPDSPVNKLAWTLGLGIYHTGLVLEGKEYAFGAHEIPGSTGVFATMPRPPLEGCRWRCSIALPNCTLPKPDVDRILIRLSQEFTGLSYSLLERNCNHFTNAAAIELTGSPIPSFLNRISRIGLAFPTITNALLQHGQKNTSDVDDSSDSSSDVDEETLIVSKSKKAHKDIPKFSAPPPSADLNNLITDSLP.

The region spanning 1-143 (MKVYINVYDL…AFPTITNALL (143 aa)) is the PPPDE domain. Catalysis depends on residues histidine 29 and cysteine 105. Positions 146–201 (GQKNTSDVDDSSDSSSDVDEETLIVSKSKKAHKDIPKFSAPPPSADLNNLITDSLP) are disordered. Positions 152–167 (DVDDSSDSSSDVDEET) are enriched in acidic residues. Residues 191–201 (DLNNLITDSLP) are compositionally biased toward polar residues.

Belongs to the DeSI family.

It is found in the cytoplasm. In terms of biological role, has a role in meiosis. The chain is DeSI-like protein sdu1 (sdu1) from Schizosaccharomyces pombe (strain 972 / ATCC 24843) (Fission yeast).